Consider the following 400-residue polypeptide: Small ribosomal subunit protein bS1 (400 aa).

4 consecutive S1 motif domains span residues 17-87 (GDVV…VTYL), 107-173 (EEVV…LSRR), 194-262 (GDVV…LSLK), and 279-348 (GDVV…LSIK). The segment covering 351 to 366 (EERPAQEEGQKEEKRA) has biased composition (basic and acidic residues). Residues 351 to 400 (EERPAQEEGQKEEKRAARPRRPRRQEKRDFELPETQTGFSMADLFGDIEL) form a disordered region.

It belongs to the bacterial ribosomal protein bS1 family. Post-translationally, phosphorylated.

Its function is as follows. Binds mRNA; thus facilitating recognition of the initiation point. It is needed to translate mRNA with a short Shine-Dalgarno (SD) purine-rich sequence. In Streptococcus pneumoniae (strain ATCC BAA-255 / R6), this protein is Small ribosomal subunit protein bS1 (rpsA).